Reading from the N-terminus, the 509-residue chain is AAA ATPase forming ring-shaped complexes (509 aa).

Residues 11–50 are a coiled coil; it reads AHLQRTISNLSARNAKLAELLKASRDKLSILQDQLEDLAA. 236-241 lines the ATP pocket; the sequence is GCGKTL.

Belongs to the AAA ATPase family. In terms of assembly, homohexamer. Assembles into a hexameric ring structure.

The chain is AAA ATPase forming ring-shaped complexes from Corynebacterium diphtheriae (strain ATCC 700971 / NCTC 13129 / Biotype gravis).